The following is a 99-amino-acid chain: Aspartyl/glutamyl-tRNA(Asn/Gln) amidotransferase subunit C (99 aa).

It belongs to the GatC family. Heterotrimer of A, B and C subunits.

The catalysed reaction is L-glutamyl-tRNA(Gln) + L-glutamine + ATP + H2O = L-glutaminyl-tRNA(Gln) + L-glutamate + ADP + phosphate + H(+). It carries out the reaction L-aspartyl-tRNA(Asn) + L-glutamine + ATP + H2O = L-asparaginyl-tRNA(Asn) + L-glutamate + ADP + phosphate + 2 H(+). In terms of biological role, allows the formation of correctly charged Asn-tRNA(Asn) or Gln-tRNA(Gln) through the transamidation of misacylated Asp-tRNA(Asn) or Glu-tRNA(Gln) in organisms which lack either or both of asparaginyl-tRNA or glutaminyl-tRNA synthetases. The reaction takes place in the presence of glutamine and ATP through an activated phospho-Asp-tRNA(Asn) or phospho-Glu-tRNA(Gln). The polypeptide is Aspartyl/glutamyl-tRNA(Asn/Gln) amidotransferase subunit C (Leptothrix cholodnii (strain ATCC 51168 / LMG 8142 / SP-6) (Leptothrix discophora (strain SP-6))).